Here is a 248-residue protein sequence, read N- to C-terminus: Phosphatidylglycerol--prolipoprotein diacylglyceryl transferase (248 aa).

Transmembrane regions (helical) follow at residues 6 to 26 (FSIFGIDIMWYGILITLGVIL), 48 to 68 (ILVWALPLAIVGARAYYVIFE), and 84 to 104 (GGGLAIYGGIIAAVITCYVIC). Arg130 serves as a coordination point for a 1,2-diacyl-sn-glycero-3-phospho-(1'-sn-glycerol). A run of 2 helical transmembrane segments spans residues 187-207 (GQITSMYMILYGILRFFVEGL) and 214-234 (IGALRVSQLVSIAIIIAGVIL).

The protein belongs to the Lgt family.

It localises to the cell membrane. It carries out the reaction L-cysteinyl-[prolipoprotein] + a 1,2-diacyl-sn-glycero-3-phospho-(1'-sn-glycerol) = an S-1,2-diacyl-sn-glyceryl-L-cysteinyl-[prolipoprotein] + sn-glycerol 1-phosphate + H(+). It functions in the pathway protein modification; lipoprotein biosynthesis (diacylglyceryl transfer). Its function is as follows. Catalyzes the transfer of the diacylglyceryl group from phosphatidylglycerol to the sulfhydryl group of the N-terminal cysteine of a prolipoprotein, the first step in the formation of mature lipoproteins. This Finegoldia magna (strain ATCC 29328 / DSM 20472 / WAL 2508) (Peptostreptococcus magnus) protein is Phosphatidylglycerol--prolipoprotein diacylglyceryl transferase.